Consider the following 105-residue polypeptide: UPF0235 protein RPR_04990 (105 aa).

This sequence belongs to the UPF0235 family.

The protein is UPF0235 protein RPR_04990 of Rickettsia peacockii (strain Rustic).